The sequence spans 122 residues: Large ribosomal subunit protein uL14 (122 aa).

The protein belongs to the universal ribosomal protein uL14 family. Part of the 50S ribosomal subunit. Forms a cluster with proteins L3 and L19. In the 70S ribosome, L14 and L19 interact and together make contacts with the 16S rRNA in bridges B5 and B8.

Binds to 23S rRNA. Forms part of two intersubunit bridges in the 70S ribosome. In Methylococcus capsulatus (strain ATCC 33009 / NCIMB 11132 / Bath), this protein is Large ribosomal subunit protein uL14.